We begin with the raw amino-acid sequence, 258 residues long: Trypsin eta (258 aa).

The first 22 residues, Met-1–Ala-22, serve as a signal peptide directing secretion. A propeptide spans Gln-23–Arg-27 (activation peptide). The Peptidase S1 domain occupies Ile-28–Val-258. The cysteines at positions 59 and 75 are disulfide-linked. Active-site charge relay system residues include His-74 and Asp-120. Intrachain disulfides connect Cys-185-Cys-200 and Cys-211-Cys-235. Ser-215 (charge relay system) is an active-site residue.

Belongs to the peptidase S1 family.

The protein resides in the secreted. Its subcellular location is the extracellular space. The catalysed reaction is Preferential cleavage: Arg-|-Xaa, Lys-|-Xaa.. This Drosophila erecta (Fruit fly) protein is Trypsin eta (etaTry).